A 1150-amino-acid polypeptide reads, in one-letter code: ATP-dependent helicase/deoxyribonuclease subunit B (1150 aa).

8–15 (GRAGSGKS) is a binding site for ATP. [4Fe-4S] cluster-binding residues include Cys-786, Cys-1106, Cys-1109, and Cys-1115.

Belongs to the helicase family. AddB/RexB type 1 subfamily. In terms of assembly, heterodimer of AddA and AddB. Requires Mg(2+) as cofactor. It depends on [4Fe-4S] cluster as a cofactor.

In terms of biological role, the heterodimer acts as both an ATP-dependent DNA helicase and an ATP-dependent, dual-direction single-stranded exonuclease. Recognizes the chi site generating a DNA molecule suitable for the initiation of homologous recombination. The AddB subunit has 5' -&gt; 3' nuclease activity but not helicase activity. The chain is ATP-dependent helicase/deoxyribonuclease subunit B from Clostridium botulinum (strain Hall / ATCC 3502 / NCTC 13319 / Type A).